The following is a 315-amino-acid chain: tRNA dimethylallyltransferase (315 aa).

13–20 lines the ATP pocket; that stretch reads GPTASGKT. 15–20 contributes to the substrate binding site; the sequence is TASGKT. 3 interaction with substrate tRNA regions span residues 38–41, 162–166, and 245–250; these read DSAL, QRIQR, and RCVGYR.

This sequence belongs to the IPP transferase family. In terms of assembly, monomer. Mg(2+) serves as cofactor.

The catalysed reaction is adenosine(37) in tRNA + dimethylallyl diphosphate = N(6)-dimethylallyladenosine(37) in tRNA + diphosphate. Its function is as follows. Catalyzes the transfer of a dimethylallyl group onto the adenine at position 37 in tRNAs that read codons beginning with uridine, leading to the formation of N6-(dimethylallyl)adenosine (i(6)A). The protein is tRNA dimethylallyltransferase of Methylobacillus flagellatus (strain ATCC 51484 / DSM 6875 / VKM B-1610 / KT).